The sequence spans 438 residues: V-type ATP synthase beta chain (438 aa).

This sequence belongs to the ATPase alpha/beta chains family.

Functionally, produces ATP from ADP in the presence of a proton gradient across the membrane. The V-type beta chain is a regulatory subunit. In Chlamydia felis (strain Fe/C-56) (Chlamydophila felis), this protein is V-type ATP synthase beta chain.